Consider the following 496-residue polypeptide: Probable 26S proteasome non-ATPase regulatory subunit 3 (496 aa).

Residues 249–428 enclose the PCI domain; that stretch reads ARFLYYLGRI…GYMRSKESTD (180 aa). The interval 458-480 is disordered; the sequence is RYPPKSYGKELESAEERREREQQ. Over residues 464-480 the composition is skewed to basic and acidic residues; the sequence is YGKELESAEERREREQQ.

It belongs to the proteasome subunit S3 family. The 26S proteasome is composed of a core protease, known as the 20S proteasome, capped at one or both ends by the 19S regulatory complex (RC). The RC is composed of at least 18 different subunits in two subcomplexes, the base and the lid, which form the portions proximal and distal to the 20S proteolytic core, respectively.

In terms of biological role, acts as a regulatory subunit of the 26 proteasome which is involved in the ATP-dependent degradation of ubiquitinated proteins. This chain is Probable 26S proteasome non-ATPase regulatory subunit 3 (Dox-A2), found in Anopheles gambiae (African malaria mosquito).